A 517-amino-acid polypeptide reads, in one-letter code: DNA-binding protein Ikaros (517 aa).

A disordered region spans residues 1–71 (MDVDEGQDMS…QSDEENGRAC (71 aa)). S13 is subject to Phosphoserine. A Phosphothreonine modification is found at T23. Positions 37-47 (LSTTSGAQQNS) are enriched in polar residues. K58 is covalently cross-linked (Glycyl lysine isopeptide (Lys-Gly) (interchain with G-Cter in SUMO)). S63 and S101 each carry phosphoserine. A C2H2-type 1 zinc finger spans residues 117–139 (LKCDICGIVCIGPNVLMVHKRSH). Position 140 is a phosphothreonine (T140). A C2H2-type 2 zinc finger spans residues 144–166 (FQCNQCGASFTQKGNLLRHIKLH). Residues 153 to 162 (FTQKGNLLRH) are required for both high-affinity DNA binding and pericentromeric heterochromatin localization. S167 bears the Phosphoserine mark. A C2H2-type 3 zinc finger spans residues 172 to 194 (FKCHLCNYACRRRDALTGHLRTH). The segment at 179-194 (YACRRRDALTGHLRTH) is required for both high-affinity DNA binding and pericentromeric heterochromatin localization. Phosphoserine is present on S195. The segment at 200–223 (HKCGYCGRSYKQRSSLEEHKERCH) adopts a C2H2-type 4 zinc-finger fold. Residue K239 forms a Glycyl lysine isopeptide (Lys-Gly) (interchain with G-Cter in SUMO) linkage. Phosphoserine occurs at positions 259, 287, 293, 357, 360, 384, 386, 388, and 392. Residues 376-400 (SVSSEREASPSNSCQDSTDTESNAE) form a disordered region. At T393 the chain carries Phosphothreonine. Phosphoserine occurs at positions 397 and 440. C2H2-type zinc fingers lie at residues 457–479 (YKCE…MGCH) and 488–512 (FECN…RGEH). Residues 463–466 (RVLF) form a required for binding PP1CC region.

It belongs to the Ikaros C2H2-type zinc-finger protein family. Heterodimer with other IKAROS family members. Interacts with IKZF4 and IKZF5. Component of the chromatin-remodeling NuRD repressor complex which includes at least HDAC1, HDAC2, RBBP4, RBBP7, IKZF1, MTA2, MBD2, MBD3, MTA1L1, CHD3 and CHD4. Interacts directly with the CHD4 component of the NuRD complex. Interacts directly with SMARCA4; the interaction associates IKFZ1 with the BAF complex. Interacts with SUMO1; the interaction sumoylates IKAROS, promoted by PIAS2 and PIAS3. Interacts with PIAS2 (isoform alpha); the interaction promotes sumoylation and reduces transcription repression. Interacts, to a lesser extent, with PIAS3. Interacts with PPP1CC; the interaction targets PPP1CC to pericentromeric heterochromatin, dephosphorylates IKAROS, stabilizes it and prevents it from degradation. Interacts with IKZF3. In terms of processing, phosphorylation at Ser-357 and Ser-360 downstream of SYK induces nuclear translocation. Phosphorylation controls cell-cycle progression from late G(1) stage to S stage. Hyperphosphorylated during G2/M phase. Dephosphorylated state during late G(1) phase. Phosphorylation on Thr-140 is required for DNA and pericentromeric location during mitosis. CK2 is the main kinase, in vitro. GSK3 and CDK may also contribute to phosphorylation of the C-terminal serine and threonine residues. Phosphorylation on these C-terminal residues reduces the DNA-binding ability. Phosphorylation/dephosphorylation events on Ser-13 and Ser-293 regulate TDT expression during thymocyte differentiation. Dephosphorylation by protein phosphatase 1 regulates stability and pericentromeric heterochromatin location. Phosphorylated in both lymphoid and non-lymphoid tissues. Post-translationally, sumoylated. Simultaneous sumoylation on the 2 sites results in a loss of both HDAC-dependent and HDAC-independent repression. Has no effect on pericentromeric heterochromatin location. Desumoylated by SENP1. Polyubiquitinated. Strongly expressed in T-cells and their progenitors,in B-cells, and in all early embryonic retinal progenitor cells (RPCs). Isoforms V and VI are the predominant isoforms in lymphocytes.

The protein resides in the nucleus. The protein localises to the cytoplasm. Its function is as follows. Transcription regulator of hematopoietic cell differentiation. Binds gamma-satellite DNA. Binds with higher affinity to gamma satellite A. Plays a role in the development of lymphocytes, B- and T-cells. Binds and activates the enhancer (delta-A element) of the CD3-delta gene. Repressor of the TDT (terminal deoxynucleotidyltransferase) gene during thymocyte differentiation. Regulates transcription through association with both HDAC-dependent and HDAC-independent complexes. Targets the 2 chromatin-remodeling complexes, NuRD and BAF (SWI/SNF), in a single complex (PYR complex), to the beta-globin locus in adult erythrocytes. Increases normal apoptosis in adult erythroid cells. Confers early temporal competence to retinal progenitor cells (RPCs). Function is isoform-specific and is modulated by dominant-negative inactive isoforms. In Mus musculus (Mouse), this protein is DNA-binding protein Ikaros (Ikzf1).